The following is a 130-amino-acid chain: Type VII secretion system extracellular protein C (130 aa).

Belongs to the EsxC family. In terms of assembly, forms both homodimers and heterodimers with EsxA. Homodimerization is calcium-dependent.

It is found in the secreted. In terms of biological role, implements its pathogenic function during infection. This is Type VII secretion system extracellular protein C from Staphylococcus aureus (strain Mu50 / ATCC 700699).